Consider the following 238-residue polypeptide: DnaA regulatory inactivator Hda (238 aa).

It belongs to the DnaA family. HdA subfamily. As to quaternary structure, the active form seems to be an ADP-bound monomer. Forms the RIDA complex (regulatory inactivation of DnaA) of ATP-DnaA, ADP-Hda and the DNA-loaded beta sliding clamp (dnaN).

Functionally, mediates the interaction of DNA replication initiator protein DnaA with DNA polymerase subunit beta sliding clamp (dnaN). Stimulates hydrolysis of ATP-DnaA to ADP-DnaA, rendering DnaA inactive for reinitiation, a process called regulatory inhibition of DnaA or RIDA. The chain is DnaA regulatory inactivator Hda from Pectobacterium atrosepticum (strain SCRI 1043 / ATCC BAA-672) (Erwinia carotovora subsp. atroseptica).